The primary structure comprises 101 residues: MKEQKIRVKLKAFDIELIDQSAQSIVASVKKTGARVSGPIPLPTSIRKVTVIRSPHVNIKSREQFEMRIYKRLIDIFDVTPQTTESLKKLALPAGVDVQLK.

Belongs to the universal ribosomal protein uS10 family. In terms of assembly, part of the 30S ribosomal subunit.

Involved in the binding of tRNA to the ribosomes. This is Small ribosomal subunit protein uS10 from Brachyspira hyodysenteriae (Treponema hyodysenteriae).